Reading from the N-terminus, the 420-residue chain is L-rhamnose isomerase (420 aa).

Positions 264, 296, and 298 each coordinate Mn(2+).

It belongs to the rhamnose isomerase family. Mn(2+) serves as cofactor.

The protein localises to the cytoplasm. It catalyses the reaction L-rhamnopyranose = L-rhamnulose. Its pathway is carbohydrate degradation; L-rhamnose degradation; glycerone phosphate from L-rhamnose: step 1/3. Functionally, catalyzes the interconversion of L-rhamnose and L-rhamnulose. This chain is L-rhamnose isomerase, found in Listeria monocytogenes serotype 4b (strain CLIP80459).